The sequence spans 1077 residues: ATP-dependent DNA helicase MPH1 (1077 aa).

One can recognise a Helicase ATP-binding domain in the interval 99 to 266 (IVHRALFENV…EVVDNLQISK (168 aa)). 112–119 (IPTGMGKT) serves as a coordination point for ATP. Residues 214 to 217 (DEAH) carry the DEAH box motif. The region spanning 511–660 (KKVDRIRRLE…SLNYKVTDRI (150 aa)) is the Helicase C-terminal domain. Disordered regions lie at residues 536 to 556 (EKLA…ISGM) and 831 to 859 (TLSS…PKRQ). The segment covering 831-841 (TLSSDNKSTPD) has biased composition (polar residues).

This sequence belongs to the DEAD box helicase family. DEAH subfamily. FANCM sub-subfamily. Interacts with the MHF histone-fold complex to form the FANCM-MHF complex.

It is found in the nucleus. The catalysed reaction is ATP + H2O = ADP + phosphate + H(+). In terms of biological role, ATP-dependent DNA helicase involved in DNA damage repair by homologous recombination and in genome maintenance. Capable of unwinding D-loops. Plays a role in limiting crossover recombinants during mitotic DNA double-strand break (DSB) repair. Component of a FANCM-MHF complex which promotes gene conversion at blocked replication forks, probably by reversal of the stalled fork. The chain is ATP-dependent DNA helicase MPH1 from Eremothecium gossypii (strain ATCC 10895 / CBS 109.51 / FGSC 9923 / NRRL Y-1056) (Yeast).